The chain runs to 55 residues: MAFTLLFGAGVSGDVATASAVGMIGSFLAAAALIVVPAASFLLWVSQKDALERGR.

The helical transmembrane segment at 24–44 threads the bilayer; it reads IGSFLAAAALIVVPAASFLLW.

The protein belongs to the PsbX family. Type 2 subfamily. As to quaternary structure, PSII consists of a core antenna complex that captures photons, and an electron transfer chain that converts photonic excitation into a charge separation. PSII forms dimeric complexes.

The protein resides in the cellular thylakoid membrane. Functionally, involved in the binding and/or turnover of quinones at the Q(B) site of Photosystem II. This chain is Photosystem II reaction center X protein, found in Prochlorococcus marinus (strain SARG / CCMP1375 / SS120).